The chain runs to 265 residues: S-adenosylmethionine decarboxylase proenzyme (265 aa).

Serine 114 functions as the Schiff-base intermediate with substrate; via pyruvic acid in the catalytic mechanism. Position 114 is a pyruvic acid (Ser); by autocatalysis (serine 114). The Proton acceptor; for processing activity role is filled by histidine 119. Cysteine 142 serves as the catalytic Proton donor; for catalytic activity.

The protein belongs to the prokaryotic AdoMetDC family. Type 2 subfamily. As to quaternary structure, heterooctamer of four alpha and four beta chains arranged as a tetramer of alpha/beta heterodimers. Pyruvate serves as cofactor. In terms of processing, is synthesized initially as an inactive proenzyme. Formation of the active enzyme involves a self-maturation process in which the active site pyruvoyl group is generated from an internal serine residue via an autocatalytic post-translational modification. Two non-identical subunits are generated from the proenzyme in this reaction, and the pyruvate is formed at the N-terminus of the alpha chain, which is derived from the carboxyl end of the proenzyme. The post-translation cleavage follows an unusual pathway, termed non-hydrolytic serinolysis, in which the side chain hydroxyl group of the serine supplies its oxygen atom to form the C-terminus of the beta chain, while the remainder of the serine residue undergoes an oxidative deamination to produce ammonia and the pyruvoyl group blocking the N-terminus of the alpha chain.

The catalysed reaction is S-adenosyl-L-methionine + H(+) = S-adenosyl 3-(methylsulfanyl)propylamine + CO2. Its pathway is amine and polyamine biosynthesis; S-adenosylmethioninamine biosynthesis; S-adenosylmethioninamine from S-adenosyl-L-methionine: step 1/1. Functionally, catalyzes the decarboxylation of S-adenosylmethionine to S-adenosylmethioninamine (dcAdoMet), the propylamine donor required for the synthesis of the polyamines spermine and spermidine from the diamine putrescine. This Buchnera aphidicola subsp. Acyrthosiphon pisum (strain APS) (Acyrthosiphon pisum symbiotic bacterium) protein is S-adenosylmethionine decarboxylase proenzyme.